Consider the following 299-residue polypeptide: Taste receptor type 2 member 5 (299 aa).

A topological domain (extracellular) is located at residue M1. A helical membrane pass occupies residues 2-22 (LSAGLGLLMLVAVIEFLIGLI). The Cytoplasmic segment spans residues 23 to 45 (GNGILVVWSLREWIRKFSWSSYN). The helical transmembrane segment at 46-66 (LIILGLAGCRFLLQWLIILDL) threads the bilayer. At 67–82 (SLFPLFQSSSWLRYLN) the chain is on the extracellular side. A helical membrane pass occupies residues 83–103 (VFWVLVSQASLWFATFLSVFY). The Cytoplasmic segment spans residues 104-127 (CKKITTFDRPAYLWLKQRAYNLSL). The helical transmembrane segment at 128 to 148 (WCLLGYFIISLLLTVQVGLTV) threads the bilayer. The Extracellular segment spans residues 149–175 (HHPPQGNSSIRYPFEHWQYLYVFQLNS). The N-linked (GlcNAc...) asparagine glycan is linked to N155. A helical membrane pass occupies residues 176–196 (GSYLPLMVFLVSSGMLIISLY). Over 197-223 (THHKKMKVHSAGRRDARAKAHITALKS) the chain is Cytoplasmic. The helical transmembrane segment at 224-244 (LGCFLLLHLVYIVASPFSITS) threads the bilayer. The Extracellular segment spans residues 245–253 (KTYPPDLTS). The chain crosses the membrane as a helical span at residues 254–274 (VFIWETLMAAYPSLHSLMLIM). Residues 275–299 (GIPRVKQTCQKILWKTVCARRCWGP) lie on the Cytoplasmic side of the membrane.

It belongs to the G-protein coupled receptor T2R family.

It localises to the membrane. Receptor that may play a role in the perception of bitterness and is gustducin-linked. May play a role in sensing the chemical composition of the gastrointestinal content. The activity of this receptor may stimulate alpha gustducin, mediate PLC-beta-2 activation and lead to the gating of TRPM5. The chain is Taste receptor type 2 member 5 (TAS2R5) from Papio hamadryas (Hamadryas baboon).